A 492-amino-acid chain; its full sequence is MFHAFTFLKGGRFYSSLTVKSLYEQVHHTSHDPISINGWIKSIRLLKRIAFLDLQDGTSVNPLRIVIPLTNTDEVQFLKILKTGQTLSISNATWQSTPNRKQPFELQIKNPVKSIKLVGPVSENYPLQKKYQTLRYLRSLPTLKYRTAYLSAILRLRSFVEFQFMLYFQKNHFTKVSPPILTSNDCEGAGELFQVSTNTSPTASSYFGKPTYLTVSTQLHLEILALSLSRCWTLSPCFRAEKSDTPRHLSEFWMLEVEMCFVNSVNELTSFVETTIKHIIKACIDNQQELLPKQFISSQENNASSELSINQETQQIKTRWEDLINEKWHNITYTNAIEILKKRHNEVSHFKYEPKWGQPLQTEHEKFLAGEYFKSPVFVTDYPRLCKPFYMKQNSTPDDTVGCFDLLVPGMGEIIGGSLREDDYDKLCREMKARGMNRSGELDWYVSLRKEGSAPHGGFGLGFERFISYLYGNHNIKDAIPFYRTSAESIDF.

The protein belongs to the class-II aminoacyl-tRNA synthetase family.

The protein resides in the mitochondrion matrix. The catalysed reaction is tRNA(Asn) + L-asparagine + ATP = L-asparaginyl-tRNA(Asn) + AMP + diphosphate + H(+). Functionally, catalyzes the attachment of asparagine to tRNA(Asn) in the mitochondrion. The sequence is that of Asparagine--tRNA ligase, mitochondrial (SLM5) from Saccharomyces cerevisiae (strain ATCC 204508 / S288c) (Baker's yeast).